Here is a 492-residue protein sequence, read N- to C-terminus: Probable ATP-citrate synthase subunit 2 (492 aa).

S24 carries the phosphoserine modification.

It in the N-terminal section; belongs to the succinate/malate CoA ligase beta subunit family. This sequence in the C-terminal section; belongs to the succinate/malate CoA ligase alpha subunit family. In terms of assembly, composed of two subunits.

It is found in the cytoplasm. It localises to the nucleus. The catalysed reaction is oxaloacetate + acetyl-CoA + ADP + phosphate = citrate + ATP + CoA. In terms of biological role, ATP citrate-lyase is the primary enzyme responsible for the synthesis of cytosolic acetyl-CoA. Has a central role in de novo lipid synthesis. The chain is Probable ATP-citrate synthase subunit 2 from Schizosaccharomyces pombe (strain 972 / ATCC 24843) (Fission yeast).